A 181-amino-acid polypeptide reads, in one-letter code: Acireductone dioxygenase (181 aa).

Residues His97, His99, Glu103, and His141 each coordinate Fe(2+). Ni(2+) is bound by residues His97, His99, Glu103, and His141.

It belongs to the acireductone dioxygenase (ARD) family. As to quaternary structure, monomer. Requires Fe(2+) as cofactor. Ni(2+) is required as a cofactor.

The catalysed reaction is 1,2-dihydroxy-5-(methylsulfanyl)pent-1-en-3-one + O2 = 3-(methylsulfanyl)propanoate + CO + formate + 2 H(+). It carries out the reaction 1,2-dihydroxy-5-(methylsulfanyl)pent-1-en-3-one + O2 = 4-methylsulfanyl-2-oxobutanoate + formate + 2 H(+). The protein operates within amino-acid biosynthesis; L-methionine biosynthesis via salvage pathway; L-methionine from S-methyl-5-thio-alpha-D-ribose 1-phosphate: step 5/6. Its function is as follows. Catalyzes 2 different reactions between oxygen and the acireductone 1,2-dihydroxy-3-keto-5-methylthiopentene (DHK-MTPene) depending upon the metal bound in the active site. Fe-containing acireductone dioxygenase (Fe-ARD) produces formate and 2-keto-4-methylthiobutyrate (KMTB), the alpha-ketoacid precursor of methionine in the methionine recycle pathway. Ni-containing acireductone dioxygenase (Ni-ARD) produces methylthiopropionate, carbon monoxide and formate, and does not lie on the methionine recycle pathway. In Pseudomonas savastanoi pv. phaseolicola (strain 1448A / Race 6) (Pseudomonas syringae pv. phaseolicola (strain 1448A / Race 6)), this protein is Acireductone dioxygenase.